The chain runs to 62 residues: Light-harvesting protein B-870 alpha chain (62 aa).

Met1 bears the N-formylmethionine mark. The Cytoplasmic segment spans residues 1 to 12; that stretch reads MWRIWQLFDPRQ. Residues 13–33 traverse the membrane as a helical segment; sequence ALVGLATFLFVLALLIHFILL. His29 serves as a coordination point for a bacteriochlorophyll. Residues 34 to 52 are Periplasmic-facing; the sequence is STERFNWLEGASTKPVQTS. Residues 53 to 62 constitute a propeptide that is removed on maturation; sequence MVMPSSDLAV.

Belongs to the antenna complex alpha subunit family. In terms of assembly, the core complex is formed by different alpha and beta chains, binding bacteriochlorophyll molecules, and arranged most probably in tetrameric structures disposed around the reaction center. The non-pigmented gamma chains may constitute additional components.

Its subcellular location is the cell inner membrane. Antenna complexes are light-harvesting systems, which transfer the excitation energy to the reaction centers. The protein is Light-harvesting protein B-870 alpha chain of Rhodospirillum rubrum.